Consider the following 1254-residue polypeptide: Histone-lysine N-methyltransferase eggless (1254 aa).

Disordered regions lie at residues 24 to 209 and 228 to 248; these read ALVE…EIPR and PVPR…SKTT. Basic and acidic residues-rich tracts occupy residues 40 to 57 and 65 to 81; these read TPEK…KDLT and KSQE…KDPE. Positions 112 to 125 are enriched in low complexity; the sequence is SVELLESPLKSPSS. The span at 136-162 shows a compositional bias: basic and acidic residues; the sequence is LEEKEKPGPAKELEPKESEPDSKESSK. The span at 172–181 shows a compositional bias: polar residues; it reads ELISSPTSDD. Composition is skewed to basic and acidic residues over residues 182 to 197 and 234 to 243; these read SLAK…EHGQ and AMQESKETQK. Positions 391–416 form a coiled coil; the sequence is TILQAKIERLAKKFEEVDLQLAQVQG. Tudor domains are found at residues 535–607 and 634–691; these read RLPI…SEKV and QCTK…KETQ. A disordered region spans residues 734–760; it reads ARKSTSKSGSPASTAAPPTGSSSSSAV. Low complexity predominate over residues 739–759; the sequence is SKSGSPASTAAPPTGSSSSSA. Residues 811–877 enclose the MBD domain; sequence LDSYSPLSKP…DNFDFTPDLR (67 aa). A Pre-SET domain is found at 939 to 1011; sequence VCCDCEDDCS…NCLNRVVQHS (73 aa). Positions 941, 943, 947, 953, 955, 993, 997, 999, and 1003 each coordinate Zn(2+). The SET domain occupies 1014–1229; sequence MKLQVFKTSN…SGTELTWNYN (216 aa). S-adenosyl-L-methionine-binding positions include 1024–1026, Asp1062, and Tyr1064; that span reads RGW. Residues 1081-1090 show a composition bias toward basic and acidic residues; that stretch reads YESDVERADL. A disordered region spans residues 1081–1139; sequence YESDVERADLDHEDDNYGPDAEDDDDFRPNNYYQKKKEKLRSSRSNSSSTQNTELDSQE. Residues 1091 to 1106 are compositionally biased toward acidic residues; it reads DHEDDNYGPDAEDDDD. Over residues 1123 to 1134 the composition is skewed to low complexity; the sequence is SRSNSSSTQNTE. S-adenosyl-L-methionine-binding positions include Arg1183 and 1186 to 1187; that span reads NH. Positions 1189, 1242, 1244, and 1249 each coordinate Zn(2+). Residues 1238-1254 enclose the Post-SET domain; sequence KVLYCQCGAQNCRVRLL.

The protein belongs to the class V-like SAM-binding methyltransferase superfamily. Histone-lysine methyltransferase family. Suvar3-9 subfamily.

The protein resides in the nucleus. Its subcellular location is the chromosome. The enzyme catalyses L-lysyl(9)-[histone H3] + 3 S-adenosyl-L-methionine = N(6),N(6),N(6)-trimethyl-L-lysyl(9)-[histone H3] + 3 S-adenosyl-L-homocysteine + 3 H(+). In terms of biological role, histone methyltransferase that specifically trimethylates 'Lys-9' of histone H3 in ovary. H3 'Lys-9' trimethylation represents a specific tag for epigenetic transcriptional repression by recruiting Su(var)205/HP1 to methylated histones. Plays a central role during oogenesis. The chain is Histone-lysine N-methyltransferase eggless (egg) from Drosophila pseudoobscura pseudoobscura (Fruit fly).